The primary structure comprises 180 residues: Large ribosomal subunit protein uL5 (180 aa).

Belongs to the universal ribosomal protein uL5 family. As to quaternary structure, part of the 50S ribosomal subunit; part of the 5S rRNA/L5/L18/L25 subcomplex. Contacts the 5S rRNA and the P site tRNA. Forms a bridge to the 30S subunit in the 70S ribosome.

In terms of biological role, this is one of the proteins that bind and probably mediate the attachment of the 5S RNA into the large ribosomal subunit, where it forms part of the central protuberance. In the 70S ribosome it contacts protein S13 of the 30S subunit (bridge B1b), connecting the 2 subunits; this bridge is implicated in subunit movement. Contacts the P site tRNA; the 5S rRNA and some of its associated proteins might help stabilize positioning of ribosome-bound tRNAs. The polypeptide is Large ribosomal subunit protein uL5 (Oenococcus oeni (strain ATCC BAA-331 / PSU-1)).